A 192-amino-acid polypeptide reads, in one-letter code: Crossover junction endodeoxyribonuclease RuvC (192 aa).

Active-site residues include Asp8, Glu67, and Asp139. Mg(2+) is bound by residues Asp8, Glu67, and Asp139.

It belongs to the RuvC family. Homodimer which binds Holliday junction (HJ) DNA. The HJ becomes 2-fold symmetrical on binding to RuvC with unstacked arms; it has a different conformation from HJ DNA in complex with RuvA. In the full resolvosome a probable DNA-RuvA(4)-RuvB(12)-RuvC(2) complex forms which resolves the HJ. The cofactor is Mg(2+).

The protein localises to the cytoplasm. It carries out the reaction Endonucleolytic cleavage at a junction such as a reciprocal single-stranded crossover between two homologous DNA duplexes (Holliday junction).. The RuvA-RuvB-RuvC complex processes Holliday junction (HJ) DNA during genetic recombination and DNA repair. Endonuclease that resolves HJ intermediates. Cleaves cruciform DNA by making single-stranded nicks across the HJ at symmetrical positions within the homologous arms, yielding a 5'-phosphate and a 3'-hydroxyl group; requires a central core of homology in the junction. The consensus cleavage sequence is 5'-(A/T)TT(C/G)-3'. Cleavage occurs on the 3'-side of the TT dinucleotide at the point of strand exchange. HJ branch migration catalyzed by RuvA-RuvB allows RuvC to scan DNA until it finds its consensus sequence, where it cleaves and resolves the cruciform DNA. This is Crossover junction endodeoxyribonuclease RuvC from Actinobacillus pleuropneumoniae serotype 5b (strain L20).